A 463-amino-acid polypeptide reads, in one-letter code: Bifunctional protein HldE (463 aa).

The interval 1–311 (MKKILVVGDL…EEIALILNQT (311 aa)) is ribokinase. 191–194 (NRFE) provides a ligand contact to ATP. The active site involves Asp260. Residues 334 to 463 (FTNGCFDLLH…IEKIKRTCND (130 aa)) form a cytidylyltransferase region.

In the N-terminal section; belongs to the carbohydrate kinase PfkB family. The protein in the C-terminal section; belongs to the cytidylyltransferase family. Homodimer.

It catalyses the reaction D-glycero-beta-D-manno-heptose 7-phosphate + ATP = D-glycero-beta-D-manno-heptose 1,7-bisphosphate + ADP + H(+). The catalysed reaction is D-glycero-beta-D-manno-heptose 1-phosphate + ATP + H(+) = ADP-D-glycero-beta-D-manno-heptose + diphosphate. It participates in nucleotide-sugar biosynthesis; ADP-L-glycero-beta-D-manno-heptose biosynthesis; ADP-L-glycero-beta-D-manno-heptose from D-glycero-beta-D-manno-heptose 7-phosphate: step 1/4. The protein operates within nucleotide-sugar biosynthesis; ADP-L-glycero-beta-D-manno-heptose biosynthesis; ADP-L-glycero-beta-D-manno-heptose from D-glycero-beta-D-manno-heptose 7-phosphate: step 3/4. In terms of biological role, catalyzes the phosphorylation of D-glycero-D-manno-heptose 7-phosphate at the C-1 position to selectively form D-glycero-beta-D-manno-heptose-1,7-bisphosphate. Its function is as follows. Catalyzes the ADP transfer from ATP to D-glycero-beta-D-manno-heptose 1-phosphate, yielding ADP-D-glycero-beta-D-manno-heptose. The polypeptide is Bifunctional protein HldE (Helicobacter pylori (strain G27)).